Consider the following 88-residue polypeptide: Toxin RelE2 (88 aa).

The protein belongs to the RelE toxin family.

Toxic component of a type II toxin-antitoxin (TA) system. Its toxic effect is neutralized by coexpression with cognate antitoxin RelB2 but no other ParD or RelB antitoxin. In Caulobacter vibrioides (strain ATCC 19089 / CIP 103742 / CB 15) (Caulobacter crescentus), this protein is Toxin RelE2 (relE2).